The chain runs to 188 residues: Adrenodoxin, mitochondrial (188 aa).

The transit peptide at methionine 1–arginine 64 directs the protein to the mitochondrion. Serine 67 is modified (phosphoserine). A 2Fe-2S ferredoxin-type domain is found at aspartate 69–valine 175. The residue at position 70 (lysine 70) is an N6-acetyllysine; alternate. The residue at position 70 (lysine 70) is an N6-succinyllysine; alternate. [2Fe-2S] cluster is bound by residues cysteine 110, cysteine 116, cysteine 119, and cysteine 156. Lysine 162 bears the N6-succinyllysine mark. At serine 181 the chain carries Phosphoserine.

It belongs to the adrenodoxin/putidaredoxin family. In terms of assembly, interacts with CYP11A1. Requires [2Fe-2S] cluster as cofactor.

It is found in the mitochondrion matrix. Essential for the synthesis of various steroid hormones, participates in the reduction of mitochondrial cytochrome P450 for steroidogenesis. Transfers electrons from adrenodoxin reductase to CYP11A1, a cytochrome P450 that catalyzes cholesterol side-chain cleavage. Does not form a ternary complex with adrenodoxin reductase and CYP11A1 but shuttles between the two enzymes to transfer electrons. The protein is Adrenodoxin, mitochondrial (Fdx1) of Mus musculus (Mouse).